The primary structure comprises 458 residues: UDP-N-acetylmuramate--L-alanine ligase (458 aa).

Gly-112–Thr-118 provides a ligand contact to ATP.

It belongs to the MurCDEF family.

It is found in the cytoplasm. The catalysed reaction is UDP-N-acetyl-alpha-D-muramate + L-alanine + ATP = UDP-N-acetyl-alpha-D-muramoyl-L-alanine + ADP + phosphate + H(+). The protein operates within cell wall biogenesis; peptidoglycan biosynthesis. Functionally, cell wall formation. The protein is UDP-N-acetylmuramate--L-alanine ligase of Geotalea daltonii (strain DSM 22248 / JCM 15807 / FRC-32) (Geobacter daltonii).